The following is a 786-amino-acid chain: Ribosome biogenesis protein BOP1 homolog (786 aa).

Residues 1–11 (MTKKLTIKRKV) are compositionally biased toward basic residues. The tract at residues 1–161 (MTKKLTIKRK…DSDTSDEEDI (161 aa)) is disordered. Composition is skewed to acidic residues over residues 28–37 (DNEEEEEEDL), 46–55 (EDSTDDEGID), 62–74 (SSED…DEEG), and 86–103 (SGDD…EDDA). Residues 104 to 113 (DAKKSSKNND) are compositionally biased toward basic and acidic residues. The span at 151-160 (ADSDTSDEED) shows a compositional bias: acidic residues. WD repeat units follow at residues 447–488 (GHTD…RTIE), 490–528 (EDVV…KLLV), 572–614 (THFK…SQIP), 617–655 (KSKG…LIKK), 658–697 (TNSK…KPYQ), 701–740 (LHRN…DLLQ), and 756–786 (REEF…RLFT).

This sequence belongs to the WD repeat BOP1/ERB1 family.

The protein localises to the nucleus. The protein resides in the nucleolus. It localises to the nucleoplasm. Required for maturation of ribosomal RNAs and formation of the large ribosomal subunit. This chain is Ribosome biogenesis protein BOP1 homolog, found in Drosophila pseudoobscura pseudoobscura (Fruit fly).